A 599-amino-acid chain; its full sequence is Elongation factor 4 (599 aa).

One can recognise a tr-type G domain in the interval 4-186 (KFIRNFSIIA…AIIKHVPPPL (183 aa)). Residues 16–21 (DHGKST) and 133–136 (NKID) each bind GTP.

Belongs to the TRAFAC class translation factor GTPase superfamily. Classic translation factor GTPase family. LepA subfamily.

It is found in the cell membrane. It carries out the reaction GTP + H2O = GDP + phosphate + H(+). Required for accurate and efficient protein synthesis under certain stress conditions. May act as a fidelity factor of the translation reaction, by catalyzing a one-codon backward translocation of tRNAs on improperly translocated ribosomes. Back-translocation proceeds from a post-translocation (POST) complex to a pre-translocation (PRE) complex, thus giving elongation factor G a second chance to translocate the tRNAs correctly. Binds to ribosomes in a GTP-dependent manner. In Ureaplasma urealyticum serovar 10 (strain ATCC 33699 / Western), this protein is Elongation factor 4.